The sequence spans 147 residues: Phosphoribosyl-AMP cyclohydrolase 2 (147 aa).

Residue Asp99 participates in Mg(2+) binding. Cys100 contacts Zn(2+). Mg(2+) contacts are provided by Asp101 and Asp103. Residues Cys116 and Cys123 each contribute to the Zn(2+) site.

Belongs to the PRA-CH family. As to quaternary structure, homodimer. It depends on Mg(2+) as a cofactor. The cofactor is Zn(2+).

The protein localises to the cytoplasm. It catalyses the reaction 1-(5-phospho-beta-D-ribosyl)-5'-AMP + H2O = 1-(5-phospho-beta-D-ribosyl)-5-[(5-phospho-beta-D-ribosylamino)methylideneamino]imidazole-4-carboxamide. Its pathway is amino-acid biosynthesis; L-histidine biosynthesis; L-histidine from 5-phospho-alpha-D-ribose 1-diphosphate: step 3/9. Catalyzes the hydrolysis of the adenine ring of phosphoribosyl-AMP. This is Phosphoribosyl-AMP cyclohydrolase 2 from Pseudomonas fluorescens (strain ATCC BAA-477 / NRRL B-23932 / Pf-5).